Here is a 404-residue protein sequence, read N- to C-terminus: MLTLPDFPLPDARGRFGPYGGRYVPETLIPALEELEAAYREAKKDPAFLEELDHYLRQFAGRPTPLYHAKRLSEYWGGAQVFLKREDLLHTGAHKINNTLGQALLARRMGKRRVIAETGAGQHGVSVATVAALFGLECVVYMGEEDVRRQALNVFRMKLLGAEVRPVAAGSRTLKDATNEAIRDWITNVRTTFYILGSVVGPHPYPMMVRDFQSVIGEEVKRQSLELFGRLPDALIAAVGGGSNAIGLFAPFAYLPEGRPKLIGVEAAGEGLSTGRHAASIGAGKRGVLHGSYMYLLYDHDGQITPAHSVSAGLDYPGVGPEHSYYADAGVAEYASVTDEEALEGFKLLARLEGIIPALESAHAIAYAAKVVPEMDKDQVVVINLSGRGDKDVTEVMRLLGGEL.

K95 is modified (N6-(pyridoxal phosphate)lysine).

It belongs to the TrpB family. Tetramer of two alpha and two beta chains. Pyridoxal 5'-phosphate is required as a cofactor.

The enzyme catalyses (1S,2R)-1-C-(indol-3-yl)glycerol 3-phosphate + L-serine = D-glyceraldehyde 3-phosphate + L-tryptophan + H2O. The protein operates within amino-acid biosynthesis; L-tryptophan biosynthesis; L-tryptophan from chorismate: step 5/5. The beta subunit is responsible for the synthesis of L-tryptophan from indole and L-serine. This is Tryptophan synthase beta chain (trpB) from Thermus thermophilus (strain ATCC BAA-163 / DSM 7039 / HB27).